The primary structure comprises 192 residues: Pyridoxal 5'-phosphate synthase subunit PdxT (192 aa).

46–48 (GES) is a binding site for L-glutamine. Catalysis depends on Cys77, which acts as the Nucleophile. L-glutamine is bound by residues Arg103 and 131–132 (IR). Residues His167 and Glu169 each act as charge relay system in the active site.

Belongs to the glutaminase PdxT/SNO family. In terms of assembly, in the presence of PdxS, forms a dodecamer of heterodimers. Only shows activity in the heterodimer.

It carries out the reaction aldehydo-D-ribose 5-phosphate + D-glyceraldehyde 3-phosphate + L-glutamine = pyridoxal 5'-phosphate + L-glutamate + phosphate + 3 H2O + H(+). The catalysed reaction is L-glutamine + H2O = L-glutamate + NH4(+). Its pathway is cofactor biosynthesis; pyridoxal 5'-phosphate biosynthesis. Functionally, catalyzes the hydrolysis of glutamine to glutamate and ammonia as part of the biosynthesis of pyridoxal 5'-phosphate. The resulting ammonia molecule is channeled to the active site of PdxS. The sequence is that of Pyridoxal 5'-phosphate synthase subunit PdxT from Exiguobacterium sibiricum (strain DSM 17290 / CCUG 55495 / CIP 109462 / JCM 13490 / 255-15).